A 273-amino-acid chain; its full sequence is Polyamine aminopropyltransferase (273 aa).

Residues Glu5–Pro238 enclose the PABS domain. Gln34 provides a ligand contact to S-methyl-5'-thioadenosine. Residues His65 and Asp90 each contribute to the spermidine site. S-methyl-5'-thioadenosine is bound by residues Glu109 and Asp140–Gly141. Asp158 functions as the Proton acceptor in the catalytic mechanism. Asp158–Asp161 is a binding site for spermidine. Pro165 contributes to the S-methyl-5'-thioadenosine binding site.

Belongs to the spermidine/spermine synthase family. Homodimer or homotetramer.

The protein localises to the cytoplasm. It catalyses the reaction S-adenosyl 3-(methylsulfanyl)propylamine + putrescine = S-methyl-5'-thioadenosine + spermidine + H(+). It participates in amine and polyamine biosynthesis; spermidine biosynthesis; spermidine from putrescine: step 1/1. Its function is as follows. Catalyzes the irreversible transfer of a propylamine group from the amino donor S-adenosylmethioninamine (decarboxy-AdoMet) to putrescine (1,4-diaminobutane) to yield spermidine. The polypeptide is Polyamine aminopropyltransferase (Thermoplasma acidophilum (strain ATCC 25905 / DSM 1728 / JCM 9062 / NBRC 15155 / AMRC-C165)).